Reading from the N-terminus, the 921-residue chain is Isoleucine--tRNA ligase (921 aa).

A 'HIGH' region motif is present at residues 57 to 67 (PYANGDIHMGH). E552 serves as a coordination point for L-isoleucyl-5'-AMP. The short motif at 593–597 (KMSKS) is the 'KMSKS' region element. K596 contributes to the ATP binding site. Positions 888, 891, 908, and 911 each coordinate Zn(2+).

The protein belongs to the class-I aminoacyl-tRNA synthetase family. IleS type 1 subfamily. Monomer. It depends on Zn(2+) as a cofactor.

It is found in the cytoplasm. It catalyses the reaction tRNA(Ile) + L-isoleucine + ATP = L-isoleucyl-tRNA(Ile) + AMP + diphosphate. In terms of biological role, catalyzes the attachment of isoleucine to tRNA(Ile). As IleRS can inadvertently accommodate and process structurally similar amino acids such as valine, to avoid such errors it has two additional distinct tRNA(Ile)-dependent editing activities. One activity is designated as 'pretransfer' editing and involves the hydrolysis of activated Val-AMP. The other activity is designated 'posttransfer' editing and involves deacylation of mischarged Val-tRNA(Ile). In Bacillus cereus (strain B4264), this protein is Isoleucine--tRNA ligase.